The primary structure comprises 148 residues: Large ribosomal subunit protein bL9 (148 aa).

It belongs to the bacterial ribosomal protein bL9 family.

In terms of biological role, binds to the 23S rRNA. In Pseudomonas syringae pv. tomato (strain ATCC BAA-871 / DC3000), this protein is Large ribosomal subunit protein bL9.